A 926-amino-acid polypeptide reads, in one-letter code: Tyrosine-protein phosphatase non-receptor type 4 (926 aa).

Residues 29 to 312 (VVCNILLLDN…EHHTFFRLDR (284 aa)) enclose the FERM domain. Disordered regions lie at residues 380-412 (DDRLETQSLPSRSPPGTPNHRNSTFTQEGTRLR) and 430-475 (EVFV…KNSW). Polar residues-rich tracts occupy residues 398-408 (NHRNSTFTQEG) and 430-456 (EVFVNQRSPSSTQANSIVLESSPSQET). Residue S474 is modified to Phosphoserine. Positions 517–589 (LIRMKPDENG…DQVVLFIKAS (73 aa)) constitute a PDZ domain. The region spanning 655 to 911 (VLTQFDQLYR…RFVCEAILKV (257 aa)) is the Tyrosine-protein phosphatase domain. Residues D820, 852-858 (CSAGIGR), and Q896 each bind substrate. C852 functions as the Phosphocysteine intermediate in the catalytic mechanism.

The protein belongs to the protein-tyrosine phosphatase family. Non-receptor class subfamily. Interacts with MAPK12 (via C-terminus); this interaction abolishes PTPN4 catalytic autoinhibition and thus activates the phosphatase activity. In terms of assembly, (Microbial infection) Interacts with attenuated rabies virus protein G; this interaction is required for virally-induced apoptosis. Highly phosphorylated on serine and threonine residues but not on tyrosines. Post-translationally, cleaved and activated by calpain I/CAPN1.

Its subcellular location is the cell membrane. The protein localises to the cytoplasm. The protein resides in the cytoskeleton. The catalysed reaction is O-phospho-L-tyrosyl-[protein] + H2O = L-tyrosyl-[protein] + phosphate. Its function is as follows. Phosphatase that plays a role in immunity, learning, synaptic plasticity or cell homeostasis. Regulates neuronal cell homeostasis by protecting neurons against apoptosis. Negatively regulates TLR4-induced interferon beta production by dephosphorylating adapter TICAM2 and inhibiting subsequent TRAM-TRIF interaction. Also dephosphorylates the immunoreceptor tyrosine-based activation motifs/ITAMs of the TCR zeta subunit and thereby negatively regulates TCR-mediated signaling pathway. May act at junctions between the membrane and the cytoskeleton. The protein is Tyrosine-protein phosphatase non-receptor type 4 (PTPN4) of Homo sapiens (Human).